We begin with the raw amino-acid sequence, 691 residues long: DNA ligase (691 aa).

NAD(+) is bound by residues 41–45 (DAEYD), 90–91 (SL), and E130. Residue K132 is the N6-AMP-lysine intermediate of the active site. NAD(+)-binding residues include R153, E190, K307, and K331. The Zn(2+) site is built by C425, C428, C443, and C449. Residues 610–691 (APQGVLAGKT…LHQLLEGNTQ (82 aa)) form the BRCT domain.

It belongs to the NAD-dependent DNA ligase family. LigA subfamily. Requires Mg(2+) as cofactor. Mn(2+) serves as cofactor.

It carries out the reaction NAD(+) + (deoxyribonucleotide)n-3'-hydroxyl + 5'-phospho-(deoxyribonucleotide)m = (deoxyribonucleotide)n+m + AMP + beta-nicotinamide D-nucleotide.. Its function is as follows. DNA ligase that catalyzes the formation of phosphodiester linkages between 5'-phosphoryl and 3'-hydroxyl groups in double-stranded DNA using NAD as a coenzyme and as the energy source for the reaction. It is essential for DNA replication and repair of damaged DNA. The polypeptide is DNA ligase (Burkholderia vietnamiensis (strain G4 / LMG 22486) (Burkholderia cepacia (strain R1808))).